Here is a 364-residue protein sequence, read N- to C-terminus: Fructose-bisphosphate aldolase B (364 aa).

Alanine 2 carries the N-acetylalanine modification. Lysine 13 carries the N6-succinyllysine modification. Serine 36 carries the phosphoserine modification. Threonine 39 bears the Phosphothreonine mark. Arginine 43 contributes to the beta-D-fructose 1,6-bisphosphate binding site. At serine 89 the chain carries Phosphoserine. At threonine 119 the chain carries Phosphothreonine. At lysine 121 the chain carries N6-succinyllysine. Residue serine 132 is modified to Phosphoserine. Glutamate 188 (proton acceptor) is an active-site residue. Lysine 230 functions as the Schiff-base intermediate with dihydroxyacetone-P in the catalytic mechanism. Residues serine 272, serine 276, serine 299, and serine 301 each carry the phosphoserine modification. 272–274 is a beta-D-fructose 1,6-bisphosphate binding site; the sequence is SGG. Position 304 (arginine 304) interacts with beta-D-fructose 1,6-bisphosphate. Serine 309 bears the Phosphoserine mark. At lysine 317 the chain carries N6-succinyllysine.

The protein belongs to the class I fructose-bisphosphate aldolase family. Homotetramer. Interacts with BBS1, BBS2, BBS4 and BBS7. Forms a ternary complex with G6PD and TP53; this interaction is direct.

It localises to the cytoplasm. The protein localises to the cytosol. It is found in the cytoskeleton. Its subcellular location is the microtubule organizing center. The protein resides in the centrosome. It localises to the centriolar satellite. It carries out the reaction beta-D-fructose 1,6-bisphosphate = D-glyceraldehyde 3-phosphate + dihydroxyacetone phosphate. The enzyme catalyses beta-D-fructose 1-phosphate = D-glyceraldehyde + dihydroxyacetone phosphate. It functions in the pathway carbohydrate degradation; glycolysis; D-glyceraldehyde 3-phosphate and glycerone phosphate from D-glucose: step 4/4. The protein operates within carbohydrate biosynthesis; gluconeogenesis. Its pathway is carbohydrate metabolism; fructose metabolism. Its function is as follows. Catalyzes the aldol cleavage of fructose 1,6-biphosphate to form two triosephosphates dihydroxyacetone phosphate and D-glyceraldehyde 3-phosphate in glycolysis as well as the reverse stereospecific aldol addition reaction in gluconeogenesis. In fructolysis, metabolizes fructose 1-phosphate derived from the phosphorylation of dietary fructose by fructokinase into dihydroxyacetone phosphate and D-glyceraldehyde. Acts as an adapter independently of its enzymatic activity, exerts a tumor suppressor role by stabilizing the ternary complex with G6PD and TP53 to inhibit G6PD activity and keep oxidative pentose phosphate metabolism in check. This chain is Fructose-bisphosphate aldolase B, found in Homo sapiens (Human).